The sequence spans 160 residues: Ribosomal RNA large subunit methyltransferase H (160 aa).

S-adenosyl-L-methionine contacts are provided by Leu-76 and Gly-108.

This sequence belongs to the RNA methyltransferase RlmH family. Homodimer.

The protein resides in the cytoplasm. The catalysed reaction is pseudouridine(1915) in 23S rRNA + S-adenosyl-L-methionine = N(3)-methylpseudouridine(1915) in 23S rRNA + S-adenosyl-L-homocysteine + H(+). Specifically methylates the pseudouridine at position 1915 (m3Psi1915) in 23S rRNA. In Bradyrhizobium sp. (strain BTAi1 / ATCC BAA-1182), this protein is Ribosomal RNA large subunit methyltransferase H.